A 453-amino-acid chain; its full sequence is Probable L-galactonate transporter (453 aa).

The disordered stretch occupies residues 1-23 (MEKENITIDPRSSFTPSSSADIP). Over 1-42 (MEKENITIDPRSSFTPSSSADIPVPPDGLVQRSTRIKRIQTT) the chain is Periplasmic. Over residues 10 to 20 (PRSSFTPSSSA) the composition is skewed to polar residues. The helical transmembrane segment at 43–63 (AMLLLFFAAVINYLDRSSLSV) threads the bilayer. The Cytoplasmic portion of the chain corresponds to 64–71 (ANLTIREE). A helical membrane pass occupies residues 72 to 92 (LGLSATEIGALLSVFSLAYGI). Topologically, residues 93–107 (AQLPCGPLLDRKGPR) are periplasmic. Residues 108 to 128 (LMLGLGMFFWSLFQAMSGMVH) form a helical membrane-spanning segment. Residues 129–174 (NFTQFVLVRIGMGIGEAPMNPCGVKVINDWFNIKERGRPMGFFNAA) lie on the Cytoplasmic side of the membrane. The helical transmembrane segment at 175 to 195 (STIGVAVSPPILAAMMLVMGW) threads the bilayer. Arg196 is a topological domain (periplasmic). A helical transmembrane segment spans residues 197–217 (GMFITIGVLGIFLAIGWYMLY). At 218 to 259 (RNREHVELTAVEQAYLNAGSVNARRDPLSFAEWRSLFRNRTM) the chain is on the cytoplasmic side. The helical transmembrane segment at 260–280 (WGMMLGFSGINYTAWLYLAWL) threads the bilayer. The Periplasmic portion of the chain corresponds to 281 to 295 (PGYLQTAYNLDLKST). Residues 296 to 316 (GLMAAIPFLFGAAGMLVNGYV) traverse the membrane as a helical segment. Residues 317–332 (TDWLVKGGMAPIKSRK) are Cytoplasmic-facing. The chain crosses the membrane as a helical span at residues 333-353 (ICIIAGMFCSAAFTLIVPQAT). At 354–359 (TSMTAV) the chain is on the periplasmic side. The helical transmembrane segment at 360–380 (LLIGMALFCIHFAGTSCWGLI) threads the bilayer. Over 381–394 (HVAVASRMTASVGS) the chain is Cytoplasmic. The helical transmembrane segment at 395–415 (IQNFASFICASFAPIITGFIV) threads the bilayer. The Periplasmic portion of the chain corresponds to 416–422 (DTTHSFR). A helical transmembrane segment spans residues 423 to 443 (LALIICGCVTAAGALAYIFLV). Topologically, residues 444–453 (RQPINDPRKD) are cytoplasmic.

This sequence belongs to the major facilitator superfamily. Phthalate permease family.

Its subcellular location is the cell inner membrane. The catalysed reaction is L-galactonate(in) + H(+)(in) = L-galactonate(out) + H(+)(out). Its function is as follows. Probably responsible for the transport of L-galactonate from the periplasm across the inner membrane. Is essential for growth on L-galactonate as the sole carbon source. The sequence is that of Probable L-galactonate transporter (lgoT) from Escherichia coli (strain K12).